Here is a 78-residue protein sequence, read N- to C-terminus: uncharacterized protein (78 aa).

2 helical membrane passes run 7-27 (ICLV…FFQF) and 41-61 (LSRI…GLLF).

It is found in the cell membrane. This is an uncharacterized protein from Bacillus subtilis (strain 168).